Reading from the N-terminus, the 705-residue chain is Probable iron-sulfur-binding oxidoreductase FadF (705 aa).

Helical transmembrane passes span 4-24 (FLIANALLFLIVTAYAVYLFV), 71-91 (IIHVMFFYGFILVQFGAIDFI), 109-129 (AFTFFQEIVTFLILIAVGWAF), 146-166 (AGLVLIFIGGLMLTVLLGNGM), 173-193 (HGLSWSEPIASGIAFMLSGVG), and 199-219 (VIFYIAWWIHLLFLLSFLVYV). 4Fe-4S ferredoxin-type domains are found at residues 268–298 (QSQLLDLYACVECGRCTNMCPATGTGKMLSP) and 360–391 (GDVITEEEIWACTTCRNCEDQCPVMNEHVDKI). 8 residues coordinate [4Fe-4S] cluster: cysteine 277, cysteine 280, cysteine 283, cysteine 287, cysteine 371, cysteine 374, cysteine 377, and cysteine 381.

[4Fe-4S] cluster serves as cofactor.

The protein localises to the cell membrane. In Bacillus subtilis (strain 168), this protein is Probable iron-sulfur-binding oxidoreductase FadF (fadF).